Here is a 260-residue protein sequence, read N- to C-terminus: Acetylglutamate kinase (260 aa).

Substrate-binding positions include 41 to 42, R63, and N156; that span reads GG.

It belongs to the acetylglutamate kinase family. ArgB subfamily.

The protein localises to the cytoplasm. It catalyses the reaction N-acetyl-L-glutamate + ATP = N-acetyl-L-glutamyl 5-phosphate + ADP. It participates in amino-acid biosynthesis; L-arginine biosynthesis; N(2)-acetyl-L-ornithine from L-glutamate: step 2/4. Functionally, catalyzes the ATP-dependent phosphorylation of N-acetyl-L-glutamate. In Halalkalibacterium halodurans (strain ATCC BAA-125 / DSM 18197 / FERM 7344 / JCM 9153 / C-125) (Bacillus halodurans), this protein is Acetylglutamate kinase.